Here is an 830-residue protein sequence, read N- to C-terminus: G-type lectin S-receptor-like serine/threonine-protein kinase SD1-13 (830 aa).

Residues 1-21 (MGCLLILLLTLICFSLRLCLA) form the signal peptide. The region spanning 22–145 (TDVITFSSEF…TNTGDEILWE (124 aa)) is the Bulb-type lectin domain. The Extracellular portion of the chain corresponds to 22 to 434 (TDVITFSSEF…SEFKKRTNRS (413 aa)). N-linked (GlcNAc...) asparagine glycosylation is found at Asn40, Asn53, and Asn82. Positions 283–321 (PSTKCDTYATCGQFASCRFNPGSTPPCMCIRGFKPQSYA) constitute an EGF-like; atypical domain. Intrachain disulfides connect Cys287-Cys299 and Cys293-Cys309. Asn327, Asn384, and Asn432 each carry an N-linked (GlcNAc...) asparagine glycan. One can recognise a PAN domain in the interval 340–423 (CESRDNNDGS…TGVVFYIRLA (84 aa)). 2 disulfide bridges follow: Cys377–Cys398 and Cys381–Cys387. A helical membrane pass occupies residues 435 to 455 (IVITVTLLVGAFLFAGTVVLA). The Cytoplasmic portion of the chain corresponds to 456–830 (LWKIAKHREK…NVSLTKITGR (375 aa)). One can recognise a Protein kinase domain in the interval 512–798 (FSITNKLGQG…NLPEPKQPAF (287 aa)). ATP-binding positions include 518–526 (LGQGGFGAV) and Lys540. Thr545 carries the post-translational modification Phosphothreonine. Ser546 and Ser561 each carry phosphoserine. A caM-binding region spans residues 601–618 (VKQRLLDWKTRFNIIDGI). The active-site Proton acceptor is the Asp637. Ser641, Ser654, and Ser670 each carry phosphoserine. Thr671 carries the post-translational modification Phosphothreonine. 9 positions are modified to phosphoserine: Ser714, Ser715, Ser726, Ser805, Ser809, Ser810, Ser813, Ser818, and Ser823. Positions 789 to 830 (NLPEPKQPAFIPRRGTSEVESSGQSDPRASINNVSLTKITGR) are disordered. Residues 806-830 (EVESSGQSDPRASINNVSLTKITGR) show a composition bias toward polar residues. A phosphothreonine mark is found at Thr825 and Thr828.

The protein belongs to the protein kinase superfamily. Ser/Thr protein kinase family. As to quaternary structure, interacts with PUB9, PUB13 and PUB14. Binds to calmodulin (CaM) in a Ca(2+)-dependent manner. In terms of processing, autophosphorylated. Mostly expressed in rosette leaves, and, to a lower extent, in cauline leaves and stems.

Its subcellular location is the cell membrane. The enzyme catalyses L-seryl-[protein] + ATP = O-phospho-L-seryl-[protein] + ADP + H(+). The catalysed reaction is L-threonyl-[protein] + ATP = O-phospho-L-threonyl-[protein] + ADP + H(+). Functionally, receptor-like serine/threonine-protein kinase that represses the disease resistance signaling pathway triggered in response to bacterial pathogen such as Pseudomonas syringae pv. tomato. In Arabidopsis thaliana (Mouse-ear cress), this protein is G-type lectin S-receptor-like serine/threonine-protein kinase SD1-13 (SD113).